The following is a 172-amino-acid chain: R-phycocyanin beta chain (172 aa).

The (2R,3E)-phycoerythrobilin site is built by Asn-35 and Asp-39. Residues Asn-72, Cys-82, and Arg-84–Asp-85 each bind (2R,3E)-phycocyanobilin. Asn-72 is modified (N4-methylasparagine). Residues Pro-149–Gly-151 and Cys-153 each bind (2R,3E)-phycoerythrobilin.

The protein belongs to the phycobiliprotein family. As to quaternary structure, heterododecamer of 6 alpha and 6 beta chains. The basic functional unit of phycobiliproteins is a ring-shaped hexamer formed from two back-to-back trimers contacting via the alpha chain subunits. The trimers are composed of alpha/beta subunit heterodimers arranged around a three-fold axis of symmetry. The phycoerythrins also contain a gamma subunit which is located in the center of the hexamer. Post-translationally, contains one covalently linked phycocyanobilin chromophore and one covalently linked phycoerythrobilin chromophore.

Its subcellular location is the plastid. The protein resides in the chloroplast thylakoid membrane. Its function is as follows. Light-harvesting photosynthetic tetrapyrrole chromophore-protein from the phycobiliprotein complex (phycobilisome, PBS). Phycocyanin is the major phycobiliprotein in the PBS rod. The chain is R-phycocyanin beta chain (rpcB) from Polysiphonia urceolata (Red alga).